The following is a 213-amino-acid chain: Flagellar transcriptional regulator FlhC (213 aa).

Residues C138, C141, C158, and C161 each contribute to the Zn(2+) site.

The protein belongs to the FlhC family. In terms of assembly, heterohexamer composed of two FlhC and four FlhD subunits. Each FlhC binds a FlhD dimer, forming a heterotrimer, and a hexamer assembles by dimerization of two heterotrimers. Zn(2+) is required as a cofactor.

It is found in the cytoplasm. Its function is as follows. Functions in complex with FlhD as a master transcriptional regulator that regulates transcription of several flagellar and non-flagellar operons by binding to their promoter region. Activates expression of class 2 flagellar genes, including fliA, which is a flagellum-specific sigma factor that turns on the class 3 genes. Also regulates genes whose products function in a variety of physiological pathways. This chain is Flagellar transcriptional regulator FlhC, found in Cupriavidus metallidurans (strain ATCC 43123 / DSM 2839 / NBRC 102507 / CH34) (Ralstonia metallidurans).